We begin with the raw amino-acid sequence, 399 residues long: MIIKPRVRGFICVTAHPTGCEANVKKQIDYVTTEGPIANGPKRVLVIGASTGYGLAARITAAFGCGADTLGVFFERPGEEGKPGTSGWYNSAAFHKFAAQKGLYAKSINGDAFSDEIKQLTIDAIKQDLGQVDQVIYSLASPRRTHPKTGEVFNSALKPIGNAVNLRGLDTDKEVIKESVLQPATQSEIDSTVAVMGGEDWQMWIDALLDAGVLAEGAQTTAFTYLGEKITHDIYWNGSIGAAKKDLDQKVLAIRESLAAHGGGDARVSVLKAVVTQASSAIPMMPLYLSLLFKVMKEKGTHEGCIEQVYSLYKDSLCGDSPHMDQEGRLRADYKELDPEVQNQVQQLWDQVTNDNIYQLTDFVGYKSEFLNLFGFGIDGVDYDADVNPDVKIPNLIQG.

Residues 48–53, 74–75, 111–112, and 139–140 contribute to the NAD(+) site; these read GASTGY, FE, DA, and LA. Tyr225 contributes to the substrate binding site. Tyr235 (proton donor) is an active-site residue. Residues Lys244 and 274-276 contribute to the NAD(+) site; that span reads VVT.

It belongs to the TER reductase family. In terms of assembly, monomer.

It carries out the reaction a 2,3-saturated acyl-[ACP] + NAD(+) = a (2E)-enoyl-[ACP] + NADH + H(+). It functions in the pathway lipid metabolism; fatty acid biosynthesis. Functionally, involved in the final reduction of the elongation cycle of fatty acid synthesis (FAS II). Catalyzes the reduction of a carbon-carbon double bond in an enoyl moiety that is covalently linked to an acyl carrier protein (ACP). The protein is Enoyl-[acyl-carrier-protein] reductase [NADH] of Yersinia pestis bv. Antiqua (strain Antiqua).